The sequence spans 190 residues: U1 small nuclear ribonucleoprotein C-1 (190 aa).

The Matrin-type zinc finger occupies 4–36 (YYCDYCDVFLVSESPSVRKAHNSGRNHLTNVRD). Residues 57-190 (FETGGGNSTS…PDRARQLGLI (134 aa)) form a disordered region. Residues 72-82 (GNPPGSQPGPP) show a composition bias toward pro residues. Positions 109 to 124 (AMLALMNGQNGMSSPG) are enriched in low complexity. Residues 125–141 (SGPPPMRFAGPPIPNNM) are compositionally biased toward pro residues. The span at 180–190 (NPDRARQLGLI) shows a compositional bias: basic and acidic residues.

Belongs to the U1 small nuclear ribonucleoprotein C family. As to quaternary structure, U1 snRNP is composed of the 7 core Sm proteins B/B', D1, D2, D3, E, F and G that assemble in a heptameric protein ring on the Sm site of the small nuclear RNA to form the core snRNP, and at least 3 U1 snRNP-specific proteins U1-70K, U1-A and U1-C. U1-C interacts with U1 snRNA and the 5' splice-site region of the pre-mRNA.

The protein localises to the nucleus. Its function is as follows. Component of the spliceosomal U1 snRNP, which is essential for recognition of the pre-mRNA 5' splice-site and the subsequent assembly of the spliceosome. U1-C is directly involved in initial 5' splice-site recognition for both constitutive and regulated alternative splicing. The interaction with the 5' splice-site seems to precede base-pairing between the pre-mRNA and the U1 snRNA. Stimulates commitment or early (E) complex formation by stabilizing the base pairing of the 5' end of the U1 snRNA and the 5' splice-site region. The sequence is that of U1 small nuclear ribonucleoprotein C-1 from Puccinia graminis f. sp. tritici (strain CRL 75-36-700-3 / race SCCL) (Black stem rust fungus).